An 814-amino-acid polypeptide reads, in one-letter code: DNA gyrase subunit A (814 aa).

The Topo IIA-type catalytic domain occupies 32–499 (LPDVRDGLKP…GVIEFREEDL (468 aa)). Tyr120 acts as the O-(5'-phospho-DNA)-tyrosine intermediate in catalysis. The short motif at 526-532 (QHRAGRG) is the GyrA-box element.

The protein belongs to the type II topoisomerase GyrA/ParC subunit family. As to quaternary structure, heterotetramer, composed of two GyrA and two GyrB chains. In the heterotetramer, GyrA contains the active site tyrosine that forms a transient covalent intermediate with DNA, while GyrB binds cofactors and catalyzes ATP hydrolysis.

It localises to the cytoplasm. It carries out the reaction ATP-dependent breakage, passage and rejoining of double-stranded DNA.. In terms of biological role, a type II topoisomerase that negatively supercoils closed circular double-stranded (ds) DNA in an ATP-dependent manner to modulate DNA topology and maintain chromosomes in an underwound state. Negative supercoiling favors strand separation, and DNA replication, transcription, recombination and repair, all of which involve strand separation. Also able to catalyze the interconversion of other topological isomers of dsDNA rings, including catenanes and knotted rings. Type II topoisomerases break and join 2 DNA strands simultaneously in an ATP-dependent manner. The sequence is that of DNA gyrase subunit A from Dehalogenimonas lykanthroporepellens (strain ATCC BAA-1523 / JCM 15061 / BL-DC-9).